Here is a 124-residue protein sequence, read N- to C-terminus: Histone H2A (124 aa).

A compositionally biased stretch (basic residues) spans 1–18; the sequence is MSGRGKSGKARTKAKSRS. The interval 1–21 is disordered; the sequence is MSGRGKSGKARTKAKSRSSRA. Ser-2 carries the N-acetylserine modification. Ser-2 is modified (phosphoserine). At Gln-104 the chain carries N5-methylglutamine. Residue Lys-119 forms a Glycyl lysine isopeptide (Lys-Gly) (interchain with G-Cter in ubiquitin) linkage.

This sequence belongs to the histone H2A family. As to quaternary structure, the nucleosome is a histone octamer containing two molecules each of H2A, H2B, H3 and H4 assembled in one H3-H4 heterotetramer and two H2A-H2B heterodimers. The octamer wraps approximately 147 bp of DNA. In terms of processing, monoubiquitination of Lys-119 gives a specific tag for epigenetic transcriptional repression. Post-translationally, phosphorylation of Ser-2 directly represses transcription.

It localises to the nucleus. Its subcellular location is the chromosome. Its function is as follows. Core component of nucleosome. Nucleosomes wrap and compact DNA into chromatin, limiting DNA accessibility to the cellular machineries which require DNA as a template. Histones thereby play a central role in transcription regulation, DNA repair, DNA replication and chromosomal stability. DNA accessibility is regulated via a complex set of post-translational modifications of histones, also called histone code, and nucleosome remodeling. The protein is Histone H2A of Paracentrotus lividus (Common sea urchin).